A 391-amino-acid chain; its full sequence is Anhydro-N-acetylmuramic acid kinase (391 aa).

9-16 (GTSYDAVE) serves as a coordination point for ATP.

It belongs to the anhydro-N-acetylmuramic acid kinase family.

It catalyses the reaction 1,6-anhydro-N-acetyl-beta-muramate + ATP + H2O = N-acetyl-D-muramate 6-phosphate + ADP + H(+). It functions in the pathway amino-sugar metabolism; 1,6-anhydro-N-acetylmuramate degradation. Its pathway is cell wall biogenesis; peptidoglycan recycling. Its function is as follows. Catalyzes the specific phosphorylation of 1,6-anhydro-N-acetylmuramic acid (anhMurNAc) with the simultaneous cleavage of the 1,6-anhydro ring, generating MurNAc-6-P. Is required for the utilization of anhMurNAc either imported from the medium or derived from its own cell wall murein, and thus plays a role in cell wall recycling. The chain is Anhydro-N-acetylmuramic acid kinase from Streptomyces coelicolor (strain ATCC BAA-471 / A3(2) / M145).